The chain runs to 174 residues: N5-carboxyaminoimidazole ribonucleotide mutase (174 aa).

Residues S16, D19, and R46 each contribute to the substrate site.

This sequence belongs to the AIR carboxylase family. Class I subfamily.

The enzyme catalyses 5-carboxyamino-1-(5-phospho-D-ribosyl)imidazole + H(+) = 5-amino-1-(5-phospho-D-ribosyl)imidazole-4-carboxylate. It functions in the pathway purine metabolism; IMP biosynthesis via de novo pathway; 5-amino-1-(5-phospho-D-ribosyl)imidazole-4-carboxylate from 5-amino-1-(5-phospho-D-ribosyl)imidazole (N5-CAIR route): step 2/2. Its function is as follows. Catalyzes the conversion of N5-carboxyaminoimidazole ribonucleotide (N5-CAIR) to 4-carboxy-5-aminoimidazole ribonucleotide (CAIR). The polypeptide is N5-carboxyaminoimidazole ribonucleotide mutase (Mycobacterium tuberculosis (strain CDC 1551 / Oshkosh)).